Here is a 464-residue protein sequence, read N- to C-terminus: MKSTVEQLSPTRVRINVEVPFAELEPDFQRAYKELAKQVRLPGFRPGKAPAKLLEARFGREAMLDQVVTEALPARYGQAVAESEVHPLGQPEIEVTKKEYGQELAFTAEVDVRPELNLPDPGALKISVDPIEVTDEDVDAELQSLRARFGTLTGVERPVAEGDFVSIDLSATIDGQEVPGATAQGLSHEVGSGRLIEGLDEALIGMSVDESREFTTKLVSGEHAGQDAQVTVTVKSVKERELPEPDDEFAQLASEFDTIDELRANLREQVGRVKRAQQAERIRDAAIDTLLEQVDIPLPEAIVKAQVDSALHGALHSLNHDESKLEEVLAQQGKSREEFENETRTAAETDVKKQLLLDALADKLQVQVGQEDLTERLVATSRQYGIEPQQLLAYLQENNQLPAMFADVRRALAIAEVIRAATVTDTAGNTIDTSEFFGKRPSGDGAADEDADQADESTTADAGE.

Residues 162-243 (GDFVSIDLSA…VKSVKERELP (82 aa)) form the PPIase FKBP-type domain. The tract at residues 431 to 464 (IDTSEFFGKRPSGDGAADEDADQADESTTADAGE) is disordered. Residues 446–455 (AADEDADQAD) are compositionally biased toward acidic residues.

It belongs to the FKBP-type PPIase family. Tig subfamily.

The protein resides in the cytoplasm. It carries out the reaction [protein]-peptidylproline (omega=180) = [protein]-peptidylproline (omega=0). Its function is as follows. Involved in protein export. Acts as a chaperone by maintaining the newly synthesized protein in an open conformation. Functions as a peptidyl-prolyl cis-trans isomerase. The chain is Trigger factor from Mycobacterium avium (strain 104).